A 154-amino-acid polypeptide reads, in one-letter code: MEKTVEIYTDGSCLGNPGPGGYGIFMIYNEHEKKLSQGYKLTTNNRMEMLGAIVALEVLTRPCVINITTDSQYVKQGIESWITNWKKRGWLTSAKKPVKNVDLWKRLDLACAKHTVTWKWVKGHSGHKYNEIVDDLARDAAGSKDLLDDVGYQP.

The 142-residue stretch at 1-142 (MEKTVEIYTD…VDDLARDAAG (142 aa)) folds into the RNase H type-1 domain. Asp10, Glu48, Asp70, and Asp134 together coordinate Mg(2+).

It belongs to the RNase H family. Monomer. Requires Mg(2+) as cofactor.

It localises to the cytoplasm. The enzyme catalyses Endonucleolytic cleavage to 5'-phosphomonoester.. Endonuclease that specifically degrades the RNA of RNA-DNA hybrids. This is Ribonuclease H from Pseudoalteromonas translucida (strain TAC 125).